The following is a 142-amino-acid chain: Large ribosomal subunit protein uL13 (142 aa).

The protein belongs to the universal ribosomal protein uL13 family. Part of the 50S ribosomal subunit.

Functionally, this protein is one of the early assembly proteins of the 50S ribosomal subunit, although it is not seen to bind rRNA by itself. It is important during the early stages of 50S assembly. The chain is Large ribosomal subunit protein uL13 from Pyrococcus furiosus (strain ATCC 43587 / DSM 3638 / JCM 8422 / Vc1).